Reading from the N-terminus, the 345-residue chain is Phosphoribosylformylglycinamidine cyclo-ligase (345 aa).

It belongs to the AIR synthase family.

Its subcellular location is the cytoplasm. It carries out the reaction 2-formamido-N(1)-(5-O-phospho-beta-D-ribosyl)acetamidine + ATP = 5-amino-1-(5-phospho-beta-D-ribosyl)imidazole + ADP + phosphate + H(+). Its pathway is purine metabolism; IMP biosynthesis via de novo pathway; 5-amino-1-(5-phospho-D-ribosyl)imidazole from N(2)-formyl-N(1)-(5-phospho-D-ribosyl)glycinamide: step 2/2. The sequence is that of Phosphoribosylformylglycinamidine cyclo-ligase from Escherichia coli O127:H6 (strain E2348/69 / EPEC).